The sequence spans 159 residues: Endoribonuclease YbeY (159 aa).

H119, H123, and H129 together coordinate Zn(2+).

This sequence belongs to the endoribonuclease YbeY family. Zn(2+) serves as cofactor.

It is found in the cytoplasm. Single strand-specific metallo-endoribonuclease involved in late-stage 70S ribosome quality control and in maturation of the 3' terminus of the 16S rRNA. In Acinetobacter baylyi (strain ATCC 33305 / BD413 / ADP1), this protein is Endoribonuclease YbeY.